The chain runs to 317 residues: ADIPOR-like receptor IZH1 (317 aa).

Residues 1–80 lie on the Lumenal side of the membrane; it reads MSEERGMKEQ…FNNESINIYT (80 aa). Asn-73 is a glycosylation site (N-linked (GlcNAc...) asparagine). Residues 81-101 traverse the membrane as a helical segment; it reads HLIPGVAYLVLFLIFADLVLA. Topologically, residues 102 to 113 are cytoplasmic; it reads QLLPGLDAGEHR. A helical membrane pass occupies residues 114–136; sequence MLRFYLLGAFTCLACSSCFHCLK. The Lumenal segment spans residues 137–148; it reads QHSEPHSRLWSK. The helical transmembrane segment at 149–169 threads the bilayer; sequence VDYLGILAQITCSTISLLYYG. Residues 170–175 lie on the Cytoplasmic side of the membrane; that stretch reads YHSYPS. The helical transmembrane segment at 176-196 threads the bilayer; that stretch reads HFVFFSTLTVALCSACAVLVL. An N-linked (GlcNAc...) asparagine glycan is attached at Asn-197. Topologically, residues 197–210 are lumenal; sequence NDSFNTVAFRPLRA. A helical membrane pass occupies residues 211–231; the sequence is FLFMAFGLSGVIPVLAGSYQF. Over 232–243 the chain is Cytoplasmic; that stretch reads GFAEWAARIQLK. The helical transmembrane segment at 244-264 threads the bilayer; that stretch reads YVLYEAVFYITGALVYGFRIP. Over 265–283 the chain is Lumenal; it reads ERFAPGKFDMVGHSHQIFH. Residues 284 to 304 traverse the membrane as a helical segment; that stretch reads LLVVLGTLCHFRAVTGSYIFI. Residues 305-317 are Cytoplasmic-facing; sequence CTGKHYSSLLMFI.

The protein belongs to the ADIPOR family.

It is found in the endoplasmic reticulum membrane. ADIPOR-like receptor involved in zinc metabolism either by altering membrane sterol content or by directly altering cellular zinc levels. In Eremothecium gossypii (strain ATCC 10895 / CBS 109.51 / FGSC 9923 / NRRL Y-1056) (Yeast), this protein is ADIPOR-like receptor IZH1 (IZH1).